We begin with the raw amino-acid sequence, 491 residues long: Mitochondrial MYO2 receptor-related protein 1 (491 aa).

Thr12 is modified (phosphothreonine). Phosphoserine is present on residues Ser16 and Ser37. Positions 295–384 form a coiled coil; that stretch reads NAEEANSREK…CKKVLKKLTE (90 aa). The interval 300–439 is interaction with MYO2; sequence NSREKSNLDI…GTSSEEDHLT (140 aa). Residues 419–491 form a disordered region; sequence KKIEEQPDSS…LPVQVEKKEK (73 aa). A compositionally biased stretch (polar residues) spans 461-472; sequence SAISTTASVQSG.

As to quaternary structure, interacts with MYO2 and PCL7. Phosphorylated by the cyclin-CDK PCL7-PHO85.

The protein resides in the bud tip. It localises to the bud neck. The protein localises to the mitochondrion outer membrane. Functionally, involved in the guiding of mitochondrial tubules to the bud tip during cell division. This chain is Mitochondrial MYO2 receptor-related protein 1 (MMR1), found in Saccharomyces cerevisiae (strain ATCC 204508 / S288c) (Baker's yeast).